Here is a 910-residue protein sequence, read N- to C-terminus: Coatomer subunit beta'-2 (910 aa).

WD repeat units lie at residues 13–52 (QRSERVKSVDLHPTEPWILSSLYSGSVCIWNYQTQTMVKS), 55–94 (VTELPVRSSKFIARKQWIVAGADDMFIRVYNYNTMDKVKV), 97–136 (AHTDYIRCVAVHPTQPFVLSSSDDMLIKLWDWDKGWMCTQ), 140–180 (GHSH…PNFT), 183–224 (GHSK…CVQT), 227–266 (GHAHNVSAVCFHPELPITLTGSEDGTVRLWHSTTYRLENT), 269–309 (YGLE…ASMD), 351–393 (TCDL…GSAL), and 461–501 (RIDV…SHLD). The interval 882 to 910 (ADGSTDGAVLVNGNDTEEQWGTNNEESSA) is disordered. Residues 900-910 (QWGTNNEESSA) show a composition bias toward polar residues.

Belongs to the WD repeat COPB2 family. Oligomeric complex that consists of at least the alpha, beta, beta', gamma, delta, epsilon and zeta subunits.

It is found in the cytoplasm. It localises to the golgi apparatus membrane. The protein localises to the cytoplasmic vesicle. Its subcellular location is the COPI-coated vesicle membrane. Its function is as follows. The coatomer is a cytosolic protein complex that binds to dilysine motifs and reversibly associates with Golgi non-clathrin-coated vesicles, which further mediate biosynthetic protein transport from the ER, via the Golgi up to the trans Golgi network. Coatomer complex is required for budding from Golgi membranes, and is essential for the retrograde Golgi-to-ER transport of dilysine-tagged proteins. The polypeptide is Coatomer subunit beta'-2 (Oryza sativa subsp. japonica (Rice)).